The primary structure comprises 453 residues: MSFDLIIKNGTVILENEARVVDIAVKGGKIAAIGQDLGDAKEVMDASGLVVSPGMVDAHTHISEPGRSHWEGYETGTRAAAKGGITTMIEMPLNQLPATVDRASIELKFDAAKGKLTIDAAQLGGLVSYNIDRLHELDEVGVVGFKCFVATCGDRGIDNDFRDVNDWQFFKGAQKLGELGQPVLVHCENALICDALGEEAKREGRVTAHDYVASRPVFTEVEAIRRVLYLAKVAGCRLHVCHISSPEGVEEVTRARQEGQDVTCESCPHYFVLDTDQFEEIGTLAKCSPPIRDLENQKGMWEKLFNGEIDCLVSDHSPCPPEMKAGNIMEAWGGIAGLQNCMDVMFDEAVQKRGMSLPMFGKLMATNAADIFGLQQKGRIALGKDADFVFIQPNSSYVLTNDDLEYRHKVSPYVGRTIGARITKTILRGDVIYDIEQGFPVAPKGQFILKHQQ.

Residues His59, His61, Lys146, His186, His242, and Asp315 each coordinate Zn(2+). The residue at position 146 (Lys146) is an N6-carboxylysine.

This sequence belongs to the metallo-dependent hydrolases superfamily. Allantoinase family. As to quaternary structure, homotetramer. Zn(2+) serves as cofactor. Post-translationally, carboxylation allows a single lysine to coordinate two zinc ions.

The catalysed reaction is (S)-allantoin + H2O = allantoate + H(+). Its pathway is nitrogen metabolism; (S)-allantoin degradation; allantoate from (S)-allantoin: step 1/1. Its function is as follows. Catalyzes the conversion of allantoin (5-ureidohydantoin) to allantoic acid by hydrolytic cleavage of the five-member hydantoin ring. The chain is Allantoinase from Escherichia coli O139:H28 (strain E24377A / ETEC).